The primary structure comprises 123 residues: Small ribosomal subunit protein uS12 (123 aa).

Asp-89 carries the post-translational modification 3-methylthioaspartic acid.

It belongs to the universal ribosomal protein uS12 family. As to quaternary structure, part of the 30S ribosomal subunit. Contacts proteins S8 and S17. May interact with IF1 in the 30S initiation complex.

Its function is as follows. With S4 and S5 plays an important role in translational accuracy. Interacts with and stabilizes bases of the 16S rRNA that are involved in tRNA selection in the A site and with the mRNA backbone. Located at the interface of the 30S and 50S subunits, it traverses the body of the 30S subunit contacting proteins on the other side and probably holding the rRNA structure together. The combined cluster of proteins S8, S12 and S17 appears to hold together the shoulder and platform of the 30S subunit. The protein is Small ribosomal subunit protein uS12 of Orientia tsutsugamushi (strain Boryong) (Rickettsia tsutsugamushi).